A 378-amino-acid polypeptide reads, in one-letter code: Queuine tRNA-ribosyltransferase (378 aa).

The Proton acceptor role is filled by aspartate 89. Substrate-binding positions include 89–93 (DSGGF), aspartate 143, glutamine 187, and glycine 214. Residues 245 to 251 (GVGKPED) are RNA binding. Residue aspartate 264 is the Nucleophile of the active site. Residues 269–273 (TRNAR) are RNA binding; important for wobble base 34 recognition. Residues cysteine 302, cysteine 304, cysteine 307, and histidine 333 each coordinate Zn(2+).

It belongs to the queuine tRNA-ribosyltransferase family. In terms of assembly, homodimer. Within each dimer, one monomer is responsible for RNA recognition and catalysis, while the other monomer binds to the replacement base PreQ1. Zn(2+) is required as a cofactor.

The catalysed reaction is 7-aminomethyl-7-carbaguanine + guanosine(34) in tRNA = 7-aminomethyl-7-carbaguanosine(34) in tRNA + guanine. The protein operates within tRNA modification; tRNA-queuosine biosynthesis. In terms of biological role, catalyzes the base-exchange of a guanine (G) residue with the queuine precursor 7-aminomethyl-7-deazaguanine (PreQ1) at position 34 (anticodon wobble position) in tRNAs with GU(N) anticodons (tRNA-Asp, -Asn, -His and -Tyr). Catalysis occurs through a double-displacement mechanism. The nucleophile active site attacks the C1' of nucleotide 34 to detach the guanine base from the RNA, forming a covalent enzyme-RNA intermediate. The proton acceptor active site deprotonates the incoming PreQ1, allowing a nucleophilic attack on the C1' of the ribose to form the product. After dissociation, two additional enzymatic reactions on the tRNA convert PreQ1 to queuine (Q), resulting in the hypermodified nucleoside queuosine (7-(((4,5-cis-dihydroxy-2-cyclopenten-1-yl)amino)methyl)-7-deazaguanosine). The sequence is that of Queuine tRNA-ribosyltransferase from Aeromonas hydrophila subsp. hydrophila (strain ATCC 7966 / DSM 30187 / BCRC 13018 / CCUG 14551 / JCM 1027 / KCTC 2358 / NCIMB 9240 / NCTC 8049).